Consider the following 331-residue polypeptide: N-arachidonyl glycine receptor (331 aa).

Topologically, residues 1–26 (MAIPSNRDQLALSNGSHPEEYKIAAL) are extracellular. A glycan (N-linked (GlcNAc...) asparagine) is linked at asparagine 14. The helical transmembrane segment at 27-47 (VFYSCIFLIGLLVNVTALWVF) threads the bilayer. Residues 48–56 (SCTTKKRTT) are Cytoplasmic-facing. A helical transmembrane segment spans residues 57–77 (VTIYMMNVALLDLVFILSLPF). Residues 78–95 (RMFYYAKGEWPFGDYFCH) are Extracellular-facing. An intrachain disulfide couples cysteine 94 to cysteine 172. A helical membrane pass occupies residues 96 to 116 (ILGALVVFYPSLALWLLALIS). Residues 117-138 (ADRYMAIVQPKYAKELKNTGKA) lie on the Cytoplasmic side of the membrane. A helical membrane pass occupies residues 139–159 (VLACVGVWIMTLTTTVPLLLL). Residues 160-191 (DEDPDKASSPATCLKISDIIHLKAVNVLNFTR) are Extracellular-facing. Asparagine 188 carries N-linked (GlcNAc...) asparagine glycosylation. Residues 192–212 (LIFFFLIPLFIMIGCYVVIIH) form a helical membrane-spanning segment. Residues 213-236 (SLLRGQTSKLKPKVKEKSIRIIVT) lie on the Cytoplasmic side of the membrane. A helical transmembrane segment spans residues 237-257 (LLLQVLACFVPFHICFALLML). Over 258 to 268 (QGEENSYSPWG) the chain is Extracellular. A helical membrane pass occupies residues 269–289 (AFTTFLMNLSTCLDVVLYYIV). Topologically, residues 290–331 (SKQFQARVISVMLYRNYLRSVRRKSVRSGSLRSLSNMNSEML) are cytoplasmic. Serine 322 carries the phosphoserine modification.

It belongs to the G-protein coupled receptor 1 family. Expressed in testis, spleen and brain (at protein level).

It is found in the cell membrane. The protein resides in the cytoplasmic vesicle membrane. In terms of biological role, g protein-coupled receptor (GPCR) that plays a role in diverse physiological processes particularly within the immune and nervous systems. Becomes active when triggered by various endogenous ligands including endocannabinoid N-arachidonyl glycine (NAGly), delta-9-tetrahydrocannabinol or resolvin D2/RvD2 derived from the omega-3 fatty acid docosahexaenoic acid (DHA). Upon RvD2 binding, facilitates the resolution of inflammation, aiding in tissue repair and homeostasis. Mechanistically, RvD2 ligation initiates Galphas protein coupling, activation of cAMP-PKA signaling pathway and phosphorylation of STAT3, leading to RvD2-stimulated macrophage phagocytosis. Mediates NAGly-induced process of reorganization of actin filaments and induction of acrosomal exocytosis. Activation by N-arachidonoyl glycine (NAGly) can also induce apoptosis in macrophages. Plays a role in homeostasis of CD8+ subsets of intraepithelial lymphocytes (IELs) (CD8alphaalpha and CD8alphabeta IELs) in small intestine by supporting preferential migration of CD8alphaalpha T-cells to intraepithelial compartment over lamina propria compartment, and by mediating their reconstitution into small intestine after bone marrow transplant. Participates also in hypotensive responses, mediating reduction in intraocular and blood pressure. The protein is N-arachidonyl glycine receptor of Rattus norvegicus (Rat).